The primary structure comprises 406 residues: E3 ubiquitin-protein ligase RING1 (406 aa).

T24 bears the Phosphothreonine mark. Positions 30 to 234 (MDGTEIAVSP…GGAGSEDSGD (205 aa)) are necessary for transcriptional repression. S38 carries the phosphoserine modification. Residues 48–88 (CPICLDMLKNTMTTKECLHRFCSDCIVTALRSGNKECPTCR) form an RING-type zinc finger. 3 positions are modified to phosphoserine: S140, S187, and S190. Disordered stretches follow at residues 151–263 (HRAQ…GEIE) and 309–354 (QQQE…PSLE). The span at 175-187 (EPGEGEGDGEDVS) shows a compositional bias: acidic residues. A Nuclear localization signal motif is present at residues 201-204 (KRPR). Gly residues predominate over residues 214 to 228 (GTGGGAAGGACGGAG). T215 is modified (phosphothreonine). 2 positions are modified to phosphoserine: S229 and S232. A necessary for interaction with CBX2 region spans residues 230–406 (EDSGDRGGTL…LCYAPTKDPK (177 aa)). Positions 235-244 (RGGTLGGGTL) are enriched in gly residues. Residues 246-258 (PPSPPGAPSPPEP) are compositionally biased toward pro residues. 2 positions are modified to phosphoserine: S248 and S254. Residues 317-343 (GGPGGGASDTGGPDGGGGERGVAGGGE) show a composition bias toward gly residues.

Component of chromatin-associated Polycomb (PcG) complexes. Part of the E2F6.com-1 complex in G0 phase composed of E2F6, MGA, MAX, TFDP1, CBX3, BAT8, EUHMTASE1, RING1, RNF2/RING2 MBLR, L3MBTL2 and YAF2. Interacts with CBX2 and PCGF6. Component of a PRC1-like complex. Component of repressive BCOR complex containing Polycomb group subcomplex at least composed of RYBP, PCGF1, BCOR and RNF2/RING2. Interacts with PHC2, PCGF2, RNF2; CBX6, CBX7 and CBX8. Interacts with BMI1. Interacts with MN1. Interacts with USP26.

Its subcellular location is the nucleus speckle. It catalyses the reaction S-ubiquitinyl-[E2 ubiquitin-conjugating enzyme]-L-cysteine + [acceptor protein]-L-lysine = [E2 ubiquitin-conjugating enzyme]-L-cysteine + N(6)-ubiquitinyl-[acceptor protein]-L-lysine.. The protein operates within protein modification; protein ubiquitination. Functionally, constitutes one of the E3 ubiquitin-protein ligases that mediate monoubiquitination of 'Lys-119' of histone H2A, thereby playing a central role in histone code and gene regulation. H2A 'Lys-119' ubiquitination gives a specific tag for epigenetic transcriptional repression and participates in X chromosome inactivation of female mammals. Essential component of a Polycomb group (PcG) multiprotein PRC1-like complex, a complex class required to maintain the transcriptionally repressive state of many genes, including Hox genes, throughout development. PcG PRC1 complex acts via chromatin remodeling and modification of histones, rendering chromatin heritably changed in its expressibility. Compared to RNF2/RING2, it does not have the main E3 ubiquitin ligase activity on histone H2A, and it may rather act as a modulator of RNF2/RING2 activity. The sequence is that of E3 ubiquitin-protein ligase RING1 from Mus musculus (Mouse).